The primary structure comprises 445 residues: Histidinol dehydrogenase (445 aa).

The NAD(+) site is built by Tyr136, Gln200, and Asn228. Substrate contacts are provided by Thr251, Gln273, and His276. Positions 273 and 276 each coordinate Zn(2+). Residues Glu342 and His343 each act as proton acceptor in the active site. The substrate site is built by His343, Asp376, Glu430, and His435. Asp376 is a Zn(2+) binding site. His435 contributes to the Zn(2+) binding site.

This sequence belongs to the histidinol dehydrogenase family. It depends on Zn(2+) as a cofactor.

It carries out the reaction L-histidinol + 2 NAD(+) + H2O = L-histidine + 2 NADH + 3 H(+). Its pathway is amino-acid biosynthesis; L-histidine biosynthesis; L-histidine from 5-phospho-alpha-D-ribose 1-diphosphate: step 9/9. Catalyzes the sequential NAD-dependent oxidations of L-histidinol to L-histidinaldehyde and then to L-histidine. This is Histidinol dehydrogenase (hisD) from Mycolicibacterium smegmatis (Mycobacterium smegmatis).